The chain runs to 65 residues: Disintegrin VLO4 (65 aa).

The region spanning 1–65 is the Disintegrin domain; the sequence is MNSGNPCCDP…PDCPRNPWKG (65 aa). Cystine bridges form between cysteine 7/cysteine 30, cysteine 21/cysteine 27, cysteine 26/cysteine 51, and cysteine 39/cysteine 58. Positions 43–45 match the Cell attachment site motif; sequence RGD.

The protein belongs to the disintegrin family. Dimeric disintegrin subfamily. In terms of assembly, homodimer; disulfide-linked. In terms of tissue distribution, expressed by the venom gland.

It is found in the secreted. In terms of biological role, poor inhibitor of platelet aggregation. The disintegrin inhibits the adhesion of cells expressing the RGD-dependent integrin alpha-5/beta-1 (ITGA5/ITGB1) to immobilized fibronectin. Inhibition on alpha-2b/beta-3 (ITGA2B/ITGB3) is low. The protein is Disintegrin VLO4 of Macrovipera lebetina obtusa (Levant blunt-nosed viper).